Reading from the N-terminus, the 245-residue chain is 1-(5-phosphoribosyl)-5-[(5-phosphoribosylamino)methylideneamino] imidazole-4-carboxamide isomerase (245 aa).

Asp-7 functions as the Proton acceptor in the catalytic mechanism. Asp-129 acts as the Proton donor in catalysis.

The protein belongs to the HisA/HisF family.

Its subcellular location is the cytoplasm. The catalysed reaction is 1-(5-phospho-beta-D-ribosyl)-5-[(5-phospho-beta-D-ribosylamino)methylideneamino]imidazole-4-carboxamide = 5-[(5-phospho-1-deoxy-D-ribulos-1-ylimino)methylamino]-1-(5-phospho-beta-D-ribosyl)imidazole-4-carboxamide. The protein operates within amino-acid biosynthesis; L-histidine biosynthesis; L-histidine from 5-phospho-alpha-D-ribose 1-diphosphate: step 4/9. The sequence is that of 1-(5-phosphoribosyl)-5-[(5-phosphoribosylamino)methylideneamino] imidazole-4-carboxamide isomerase from Salmonella dublin (strain CT_02021853).